A 243-amino-acid polypeptide reads, in one-letter code: VVGGKPAKLGAWPWMVALGFHNYRQPKKSPEWKCGGSLRISRHVLTAAHCAIHRSLYVVRIADLNLKRDDDGAHPIQMGIESKLIHPDYVYSEHHDDIAILKLEKDVSFSEYIRPICLPIEESLRNNNFIGYNPFVAGWGRLRYKGPLSDALMEVQVPVVRNKVCKRAYSDVSDTVICAGYPKGRKDSCQGDSGGPLMIPQESTYYEIGVVSYGHECALPKYPGVYTRVTSYLDSFILPALKK.

Residues 1-243 (VVGGKPAKLG…DSFILPALKK (243 aa)) form the Peptidase S1 domain. Cysteines 34 and 50 form a disulfide. Active-site charge relay system residues include H49 and D97. 2 disulfide bridges follow: C165/C178 and C189/C217. Residue S193 is the Charge relay system of the active site.

It belongs to the peptidase S1 family. As to expression, expressed by the venom duct.

It localises to the secreted. The polypeptide is Venom protease (Bombus pensylvanicus (American bumblebee)).